A 304-amino-acid chain; its full sequence is Recombination-associated protein RdgC (304 aa).

This sequence belongs to the RdgC family.

It localises to the cytoplasm. The protein resides in the nucleoid. Functionally, may be involved in recombination. The chain is Recombination-associated protein RdgC from Shewanella baltica (strain OS223).